A 54-amino-acid polypeptide reads, in one-letter code: ATP synthase protein 8 (54 aa).

A helical transmembrane segment spans residues 13–32 (ITFTFVIITLMVYILSKYIL).

Belongs to the ATPase protein 8 family. F-type ATPases have 2 components, CF(1) - the catalytic core - and CF(0) - the membrane proton channel.

It localises to the mitochondrion membrane. Its function is as follows. Mitochondrial membrane ATP synthase (F(1)F(0) ATP synthase or Complex V) produces ATP from ADP in the presence of a proton gradient across the membrane which is generated by electron transport complexes of the respiratory chain. F-type ATPases consist of two structural domains, F(1) - containing the extramembraneous catalytic core and F(0) - containing the membrane proton channel, linked together by a central stalk and a peripheral stalk. During catalysis, ATP synthesis in the catalytic domain of F(1) is coupled via a rotary mechanism of the central stalk subunits to proton translocation. Part of the complex F(0) domain. Minor subunit located with subunit a in the membrane. In Neurospora crassa (strain ATCC 24698 / 74-OR23-1A / CBS 708.71 / DSM 1257 / FGSC 987), this protein is ATP synthase protein 8 (atp-8).